A 76-amino-acid polypeptide reads, in one-letter code: Small ribosomal subunit protein bS18 (76 aa).

This sequence belongs to the bacterial ribosomal protein bS18 family. In terms of assembly, part of the 30S ribosomal subunit. Forms a tight heterodimer with protein bS6.

Functionally, binds as a heterodimer with protein bS6 to the central domain of the 16S rRNA, where it helps stabilize the platform of the 30S subunit. The protein is Small ribosomal subunit protein bS18 of Ectopseudomonas mendocina (strain ymp) (Pseudomonas mendocina).